The chain runs to 389 residues: Na(+)/H(+) antiporter NhaA (389 aa).

The next 11 helical transmembrane spans lie at 14-34, 59-79, 95-115, 124-144, 154-174, 177-197, 213-233, 261-281, 290-310, 328-348, and 363-383; these read AGGI…NSPL, LLLW…GLEV, SLPS…YLLF, AGWA…MALL, VFLL…IALF, SDLS…LVGL, LILW…GVII, FLIL…NMSL, IGIA…FSFI, IAPV…IASL, and LGTL…LSKV.

It belongs to the NhaA Na(+)/H(+) (TC 2.A.33) antiporter family.

It localises to the cell inner membrane. The catalysed reaction is Na(+)(in) + 2 H(+)(out) = Na(+)(out) + 2 H(+)(in). Its function is as follows. Na(+)/H(+) antiporter that extrudes sodium in exchange for external protons. This Shewanella sp. (strain W3-18-1) protein is Na(+)/H(+) antiporter NhaA.